A 293-amino-acid polypeptide reads, in one-letter code: 3-methyl-2-oxobutanoate hydroxymethyltransferase (293 aa).

Positions 1-25 are disordered; that stretch reads MTDSPTAGTPYGTLPPASPLPQRRP. 2 residues coordinate Mg(2+): Asp67 and Asp110. 3-methyl-2-oxobutanoate contacts are provided by residues 67–68, Asp110, and Lys139; that span reads DS. Glu141 contributes to the Mg(2+) binding site. The Proton acceptor role is filled by Glu208.

This sequence belongs to the PanB family. Homodecamer; pentamer of dimers. Requires Mg(2+) as cofactor.

It is found in the cytoplasm. It carries out the reaction 3-methyl-2-oxobutanoate + (6R)-5,10-methylene-5,6,7,8-tetrahydrofolate + H2O = 2-dehydropantoate + (6S)-5,6,7,8-tetrahydrofolate. It functions in the pathway cofactor biosynthesis; (R)-pantothenate biosynthesis; (R)-pantoate from 3-methyl-2-oxobutanoate: step 1/2. In terms of biological role, catalyzes the reversible reaction in which hydroxymethyl group from 5,10-methylenetetrahydrofolate is transferred onto alpha-ketoisovalerate to form ketopantoate. The chain is 3-methyl-2-oxobutanoate hydroxymethyltransferase from Acidovorax sp. (strain JS42).